Reading from the N-terminus, the 484-residue chain is tRNA sulfurtransferase (484 aa).

Residues 63–167 (REMIERLTCT…LDRLFVIHRQ (105 aa)) enclose the THUMP domain. ATP is bound by residues 185 to 186 (LM), lysine 267, glycine 289, and glutamine 298. A disulfide bridge connects residues cysteine 346 and cysteine 457. Residues 405–483 (VLPGQIVIDI…GHTNVRVYRP (79 aa)) enclose the Rhodanese domain. The active-site Cysteine persulfide intermediate is the cysteine 457.

The protein belongs to the ThiI family.

It is found in the cytoplasm. It carries out the reaction [ThiI sulfur-carrier protein]-S-sulfanyl-L-cysteine + a uridine in tRNA + 2 reduced [2Fe-2S]-[ferredoxin] + ATP + H(+) = [ThiI sulfur-carrier protein]-L-cysteine + a 4-thiouridine in tRNA + 2 oxidized [2Fe-2S]-[ferredoxin] + AMP + diphosphate. The catalysed reaction is [ThiS sulfur-carrier protein]-C-terminal Gly-Gly-AMP + S-sulfanyl-L-cysteinyl-[cysteine desulfurase] + AH2 = [ThiS sulfur-carrier protein]-C-terminal-Gly-aminoethanethioate + L-cysteinyl-[cysteine desulfurase] + A + AMP + 2 H(+). Its pathway is cofactor biosynthesis; thiamine diphosphate biosynthesis. Its function is as follows. Catalyzes the ATP-dependent transfer of a sulfur to tRNA to produce 4-thiouridine in position 8 of tRNAs, which functions as a near-UV photosensor. Also catalyzes the transfer of sulfur to the sulfur carrier protein ThiS, forming ThiS-thiocarboxylate. This is a step in the synthesis of thiazole, in the thiamine biosynthesis pathway. The sulfur is donated as persulfide by IscS. This Pseudomonas aeruginosa (strain UCBPP-PA14) protein is tRNA sulfurtransferase.